Consider the following 343-residue polypeptide: Thioredoxin domain-containing protein 15 (343 aa).

The signal sequence occupies residues 1-20 (MQLLCWWQILLWVLGLPARG). Residues 21-304 (LEEDSGHTWQ…GPLPSTLVKT (284 aa)) are Extracellular-facing. Positions 86–95 (EDQRSTEAHD) are enriched in basic and acidic residues. A disordered region spans residues 86 to 112 (EDQRSTEAHDGTCSAQGDEDPRCGGRE). The Thioredoxin domain occupies 162-279 (ERNVTGLENF…LKIFIFNQTG (118 aa)). N-linked (GlcNAc...) asparagine glycans are attached at residues N170, N177, N189, and N276. Residues 305-325 (VDWLLVFSLFFLISFIMYATI) form a helical membrane-spanning segment. Residues 326–343 (RTESIRWLIPGQEQEHAE) lie on the Cytoplasmic side of the membrane.

The protein resides in the cell projection. The protein localises to the cilium membrane. Its function is as follows. Acts as a positive regulator of ciliary hedgehog signaling. Required for cilia biogenesis. The polypeptide is Thioredoxin domain-containing protein 15 (Txndc15) (Rattus norvegicus (Rat)).